Here is a 130-residue protein sequence, read N- to C-terminus: Small ribosomal subunit protein uS11 (130 aa).

The protein belongs to the universal ribosomal protein uS11 family. As to quaternary structure, part of the 30S ribosomal subunit. Interacts with proteins S7 and S18. Binds to IF-3.

Functionally, located on the platform of the 30S subunit, it bridges several disparate RNA helices of the 16S rRNA. Forms part of the Shine-Dalgarno cleft in the 70S ribosome. This chain is Small ribosomal subunit protein uS11, found in Alteromonas mediterranea (strain DSM 17117 / CIP 110805 / LMG 28347 / Deep ecotype).